Here is a 213-residue protein sequence, read N- to C-terminus: Small ribosomal subunit protein eS1 (213 aa).

The segment at Ala189 to Ala213 is disordered. The segment covering Val194–Ala213 has biased composition (acidic residues).

Belongs to the eukaryotic ribosomal protein eS1 family.

The chain is Small ribosomal subunit protein eS1 from Haloarcula marismortui (strain ATCC 43049 / DSM 3752 / JCM 8966 / VKM B-1809) (Halobacterium marismortui).